Here is a 760-residue protein sequence, read N- to C-terminus: Golgin subfamily A member 5 (760 aa).

Topologically, residues 1–727 (MSWFVDLAGK…IFLRRYPMAR (727 aa)) are cytoplasmic. The span at 95 to 111 (VSSTTPLGSSSKASSNF) shows a compositional bias: polar residues. 3 disordered regions span residues 95 to 114 (VSST…FVRP), 126 to 216 (DFLN…SQAD), and 432 to 456 (TEEK…EYTK). Residues 135–146 (QSEKKEVRRETV) show a composition bias toward basic and acidic residues. The span at 148-166 (KAFSPTGVSAQSQMPTVSL) shows a compositional bias: polar residues. Residues 174 to 201 (PSVTPTPSSTQGLSRNSSLGSLSSSSHS) show a composition bias toward low complexity. The stretch at 249 to 668 (QGQEHVISNL…LQGGQNSASH (420 aa)) forms a coiled coil. Over residues 441–450 (LQQQAKSSRS) the composition is skewed to polar residues. Residues 728-748 (VFVIIYMALLHLWVMIVLLTY) form a helical; Anchor for type IV membrane protein membrane-spanning segment. Residues 749-760 (TPEMHHSHPDGR) lie on the Extracellular side of the membrane.

Its subcellular location is the golgi apparatus membrane. Its function is as follows. Involved in maintaining Golgi structure. Stimulates the formation of Golgi stacks and ribbons. Involved in intra-Golgi retrograde transport. In Danio rerio (Zebrafish), this protein is Golgin subfamily A member 5 (golga5).